Here is a 492-residue protein sequence, read N- to C-terminus: Aerolysin-3 (492 aa).

Positions 1–23 (MKKLKITGLSLIISGLLMAQAQA) are cleaved as a signal peptide. 2 disulfide bridges follow: C42–C98 and C182–C187. The interaction with host N-linked glycan stretch occupies residues 68 to 84 (WQISGLANGWVIMGPGY). Residues 256–288 (YGLSEKVTTKNKFKWPLVGETELSIEIAANQSW) are part of the transmembrane beta-barrel after proteolytic activation of the toxin and insertion into the host membrane. The interaction with glycans from host GPI-anchor stretch occupies residues 346–355 (RWGGNAWYTH). Positions 446-492 (AAASHSSRARNLSAGQGLRLEIPLDAQELSGLGFNNVSLSVTPAANQ) are excised as a propeptide.

This sequence belongs to the aerolysin family. Homodimer in solution; homoheptamer in the host membrane. After binding to GPI-anchored proteins in target membranes and proteolytic removal of the C-terminal propeptide, the protein assembles into a heptameric pre-pore complex. A further conformation change leads to insertion into the host membrane. In terms of processing, proteolytic cleavage and subsequent release of the propeptide trigger a major conformation change, leading to the formation of a heptameric pre-pore that then inserts into the host membrane.

The protein localises to the secreted. The protein resides in the host cell membrane. In terms of biological role, secreted, cytolytic toxin that forms pores in host membranes after proteolytic removal of a C-terminal propeptide, leading to destruction of the membrane permeability barrier and cell death. The pores are formed by transmembrane beta-strands and are approximately 3 nm in diameter. The protein is Aerolysin-3 (ahh3) of Aeromonas hydrophila.